The sequence spans 103 residues: Co-chaperonin GroES (103 aa).

This sequence belongs to the GroES chaperonin family. In terms of assembly, heptamer of 7 subunits arranged in a ring. Interacts with the chaperonin GroEL.

The protein resides in the cytoplasm. In terms of biological role, together with the chaperonin GroEL, plays an essential role in assisting protein folding. The GroEL-GroES system forms a nano-cage that allows encapsulation of the non-native substrate proteins and provides a physical environment optimized to promote and accelerate protein folding. GroES binds to the apical surface of the GroEL ring, thereby capping the opening of the GroEL channel. The protein is Co-chaperonin GroES of Dinoroseobacter shibae (strain DSM 16493 / NCIMB 14021 / DFL 12).